The chain runs to 417 residues: Gamma-glutamyl phosphate reductase (417 aa).

This sequence belongs to the gamma-glutamyl phosphate reductase family.

Its subcellular location is the cytoplasm. The catalysed reaction is L-glutamate 5-semialdehyde + phosphate + NADP(+) = L-glutamyl 5-phosphate + NADPH + H(+). It participates in amino-acid biosynthesis; L-proline biosynthesis; L-glutamate 5-semialdehyde from L-glutamate: step 2/2. Functionally, catalyzes the NADPH-dependent reduction of L-glutamate 5-phosphate into L-glutamate 5-semialdehyde and phosphate. The product spontaneously undergoes cyclization to form 1-pyrroline-5-carboxylate. The polypeptide is Gamma-glutamyl phosphate reductase (Streptococcus agalactiae serotype III (strain NEM316)).